A 170-amino-acid polypeptide reads, in one-letter code: Large ribosomal subunit protein uL10 (170 aa).

Belongs to the universal ribosomal protein uL10 family. Part of the ribosomal stalk of the 50S ribosomal subunit. The N-terminus interacts with L11 and the large rRNA to form the base of the stalk. The C-terminus forms an elongated spine to which L12 dimers bind in a sequential fashion forming a multimeric L10(L12)X complex.

In terms of biological role, forms part of the ribosomal stalk, playing a central role in the interaction of the ribosome with GTP-bound translation factors. In Corynebacterium urealyticum (strain ATCC 43042 / DSM 7109), this protein is Large ribosomal subunit protein uL10.